The sequence spans 141 residues: Nuclear receptor 2C2-associated protein (141 aa).

It belongs to the NR2C2AP family.

It is found in the nucleus. In terms of biological role, may act as a repressor of nr2c2-mediated transactivation by suppressing the binding between nr2c2 and its response element in target genes. In Danio rerio (Zebrafish), this protein is Nuclear receptor 2C2-associated protein (nr2c2ap).